We begin with the raw amino-acid sequence, 423 residues long: Glutamyl-tRNA reductase (423 aa).

Substrate contacts are provided by residues 49–52, Ser107, 112–114, and Gln118; these read TCNR and EPQ. Cys50 functions as the Nucleophile in the catalytic mechanism. 187-192 is an NADP(+) binding site; the sequence is GAGETI.

The protein belongs to the glutamyl-tRNA reductase family. As to quaternary structure, homodimer.

It catalyses the reaction (S)-4-amino-5-oxopentanoate + tRNA(Glu) + NADP(+) = L-glutamyl-tRNA(Glu) + NADPH + H(+). It participates in porphyrin-containing compound metabolism; protoporphyrin-IX biosynthesis; 5-aminolevulinate from L-glutamyl-tRNA(Glu): step 1/2. Its function is as follows. Catalyzes the NADPH-dependent reduction of glutamyl-tRNA(Glu) to glutamate 1-semialdehyde (GSA). The polypeptide is Glutamyl-tRNA reductase (Pseudoalteromonas atlantica (strain T6c / ATCC BAA-1087)).